A 159-amino-acid chain; its full sequence is Protein B1 (159 aa).

Over residues 1–15 (MQKNMKTKKTKKRGR) the composition is skewed to basic residues. Disordered stretches follow at residues 1-100 (MQKN…RTRE) and 133-159 (PGHG…DPPR). Residues 16–31 (KEGNTPETERRMEPAR) show a composition bias toward basic and acidic residues. Over residues 85 to 96 (RGRHIHTRGART) the composition is skewed to basic residues.

In Human herpesvirus 6B (strain Z29) (HHV-6 variant B), this protein is Protein B1 (B1).